A 195-amino-acid polypeptide reads, in one-letter code: Imidazoleglycerol-phosphate dehydratase (195 aa).

The protein belongs to the imidazoleglycerol-phosphate dehydratase family.

The protein resides in the cytoplasm. It catalyses the reaction D-erythro-1-(imidazol-4-yl)glycerol 3-phosphate = 3-(imidazol-4-yl)-2-oxopropyl phosphate + H2O. It functions in the pathway amino-acid biosynthesis; L-histidine biosynthesis; L-histidine from 5-phospho-alpha-D-ribose 1-diphosphate: step 6/9. This Nitrosomonas eutropha (strain DSM 101675 / C91 / Nm57) protein is Imidazoleglycerol-phosphate dehydratase.